Reading from the N-terminus, the 178-residue chain is MMTSEKDTEQNEELNEKQKPPVSMAGRVAATGFCGGVLWSFVAYIAYLFHFSEISPNMILQPFVLGEWKKHGLGTVISIILIGVISIGAAFLYFLLLKRLKTMWPGILYGLVLWLLVFFVFNPIFPDVRTVTELTSDTIITTICIYLLYGLFVGYSISFEYNELNSEKLARALGMHRE.

4 consecutive transmembrane segments (helical) span residues 29–49 (AATG…AYLF), 76–96 (VISI…YFLL), 105–125 (PGIL…NPIF), and 139–159 (IITT…SISF).

It is found in the cell membrane. This is an uncharacterized protein from Bacillus subtilis (strain 168).